The following is a 449-amino-acid chain: Phosphoglucosamine mutase (449 aa).

Residue Ser101 is the Phosphoserine intermediate of the active site. Mg(2+)-binding residues include Ser101, Asp240, Asp242, and Asp244. Position 101 is a phosphoserine (Ser101).

Belongs to the phosphohexose mutase family. The cofactor is Mg(2+). Post-translationally, activated by phosphorylation.

The enzyme catalyses alpha-D-glucosamine 1-phosphate = D-glucosamine 6-phosphate. Functionally, catalyzes the conversion of glucosamine-6-phosphate to glucosamine-1-phosphate. In Streptococcus suis (strain 98HAH33), this protein is Phosphoglucosamine mutase.